The sequence spans 122 residues: Large ribosomal subunit protein uL14c (122 aa).

It belongs to the universal ribosomal protein uL14 family. Part of the 50S ribosomal subunit.

The protein localises to the plastid. Its subcellular location is the chloroplast. In terms of biological role, binds to 23S rRNA. This chain is Large ribosomal subunit protein uL14c, found in Anthoceros angustus (Hornwort).